The chain runs to 327 residues: Tetraacyldisaccharide 4'-kinase (327 aa).

Position 54-61 (54-61 (TTGGTGKT)) interacts with ATP. Residues 78 to 106 (PHILSRGHGGRERGPIGVNPNRSTPRDVG) are disordered.

It belongs to the LpxK family.

It catalyses the reaction a lipid A disaccharide + ATP = a lipid IVA + ADP + H(+). It functions in the pathway glycolipid biosynthesis; lipid IV(A) biosynthesis; lipid IV(A) from (3R)-3-hydroxytetradecanoyl-[acyl-carrier-protein] and UDP-N-acetyl-alpha-D-glucosamine: step 6/6. Functionally, transfers the gamma-phosphate of ATP to the 4'-position of a tetraacyldisaccharide 1-phosphate intermediate (termed DS-1-P) to form tetraacyldisaccharide 1,4'-bis-phosphate (lipid IVA). This is Tetraacyldisaccharide 4'-kinase from Gluconobacter oxydans (strain 621H) (Gluconobacter suboxydans).